We begin with the raw amino-acid sequence, 358 residues long: uncharacterized protein (358 aa).

A compositionally biased stretch (low complexity) spans 70–88 (RPAATAGTTPATGASGSAR). Residues 70–93 (RPAATAGTTPATGASGSARPTDAA) form a disordered region. Residues 178 to 353 (PSTCRGDNVS…AFSAAIQAGE (176 aa)) form the Macro domain.

This is an uncharacterized protein from Mycobacterium bovis (strain ATCC BAA-935 / AF2122/97).